The sequence spans 339 residues: N-acetylornithine carbamoyltransferase (339 aa).

Carbamoyl phosphate contacts are provided by residues 49 to 52, tryptophan 77, and arginine 112; that span reads SMRT. Residue glutamate 144 coordinates N(2)-acetyl-L-ornithine. Residue 148-151 coordinates carbamoyl phosphate; it reads HPCQ. The N(2)-acetyl-L-ornithine site is built by lysine 252 and leucine 295. 294 to 295 contacts carbamoyl phosphate; that stretch reads CL. Lysine 302 carries the post-translational modification N6-carboxylysine. A carbamoyl phosphate-binding site is contributed by arginine 322.

Belongs to the aspartate/ornithine carbamoyltransferase superfamily. AOTCase family. As to quaternary structure, homotrimer.

It localises to the cytoplasm. The catalysed reaction is N(2)-acetyl-L-ornithine + carbamoyl phosphate = N(2)-acetyl-L-citrulline + phosphate + H(+). It participates in amino-acid biosynthesis; L-arginine biosynthesis. Its activity is regulated as follows. Carboxylation at Lys-302 increases the catalytic activity of the enzyme. Is potently inhibited by N(alpha)-acetyl-N(delta)-phosphonoacetyl-L-ornithine (PALAO). Its function is as follows. Catalyzes the transfer of the carbamoyl group from carbamoyl phosphate to the delta-amino group of N(2)-acetyl-L-ornithine to produce N(2)-acetyl-L-citrulline. This is a step in an alternative arginine biosynthesis pathway. The enzyme has no activity with ornithine. This chain is N-acetylornithine carbamoyltransferase, found in Xanthomonas campestris pv. campestris (strain ATCC 33913 / DSM 3586 / NCPPB 528 / LMG 568 / P 25).